A 280-amino-acid polypeptide reads, in one-letter code: Undecaprenyl-diphosphatase (280 aa).

Transmembrane regions (helical) follow at residues 19–39 (FLPV…PFSG), 44–64 (FDDL…LFLY), 89–109 (FYFL…GFIA), 125–145 (ILAS…WFFQ), 156–176 (VGFR…IPGV), 197–217 (AEFS…YKLI), 226–246 (VTIP…TLVI), and 259–279 (GVFG…TKFI).

This sequence belongs to the UppP family.

The protein resides in the cell inner membrane. It catalyses the reaction di-trans,octa-cis-undecaprenyl diphosphate + H2O = di-trans,octa-cis-undecaprenyl phosphate + phosphate + H(+). In terms of biological role, catalyzes the dephosphorylation of undecaprenyl diphosphate (UPP). Confers resistance to bacitracin. The polypeptide is Undecaprenyl-diphosphatase (Leptospira borgpetersenii serovar Hardjo-bovis (strain L550)).